The chain runs to 1901 residues: Methylcytosine dioxygenase tet3 (1901 aa).

The segment at 58-99 (SNKKRKRCGVCVPCLRKEPCGACYNCVNRSTSHQICKMRKCE) adopts a CXXC-type zinc-finger fold. C65, C68, C71, C77, C80, C83, C93, and C98 together coordinate Zn(2+). Disordered stretches follow at residues 434–455 (KNALPVPQSPRQTSWEQNKKSS), 602–658 (WWVP…EGSA), 751–787 (KDQCPTPSTHDTSSSSGQGDSANQHTNVSDVPGQNDL), and 808–867 (DFSL…PVSR). Composition is skewed to polar residues over residues 442–455 (SPRQTSWEQNKKSS) and 602–614 (WWVPSSQQAPVSK). Basic residues predominate over residues 640 to 652 (KPQRKQVQIKKPK). Over residues 758-771 (STHDTSSSSGQGDS) the composition is skewed to low complexity. Residues 847–867 (ENSTKPATHSNPALSNNPVSR) show a composition bias toward polar residues. Positions 957, 959, 1017, 1043, and 1045 each coordinate Zn(2+). R1085 contributes to the 2-oxoglutarate binding site. Positions 1095, 1097, 1113, 1122, and 1182 each coordinate Zn(2+). C1198 is a binding site for 2-oxoglutarate. H1204 serves as a coordination point for Zn(2+). Positions 1206 and 1208 each coordinate Fe cation. H1240 serves as a coordination point for 2-oxoglutarate. Disordered stretches follow at residues 1282–1338 (SEPA…QQTK), 1457–1501 (YGSE…VETT), 1591–1624 (SNAPGLKDKQWPPYGTDVSVRQHDSLDSQSPGKV), and 1680–1745 (SATP…DEEI). Positions 1291–1325 (RQLEAKKAAAEKKKLQKEKLVSPDKTKQEPSDKKT) are enriched in basic and acidic residues. Positions 1326 to 1338 (CQQNPGVPQQQTK) are enriched in polar residues. A compositionally biased stretch (basic and acidic residues) spans 1465-1474 (SFRRSSEVPH). The span at 1477–1487 (SLQNPSSQKSV) shows a compositional bias: polar residues. Polar residues-rich tracts occupy residues 1680-1693 (SATPSDRSSITPCS) and 1702-1719 (SFPNPTVNSLKTDSSQNH). H1780 is a Fe cation binding site. A 2-oxoglutarate-binding site is contributed by 1795–1797 (RIS).

It belongs to the TET family. Fe(2+) serves as cofactor. Zn(2+) is required as a cofactor.

It is found in the nucleus. The protein localises to the chromosome. It catalyses the reaction a 5-methyl-2'-deoxycytidine in DNA + 2-oxoglutarate + O2 = a 5-hydroxymethyl-2'-deoxycytidine in DNA + succinate + CO2. The catalysed reaction is a 5-hydroxymethyl-2'-deoxycytidine in DNA + 2-oxoglutarate + O2 = a 5-formyl-2'-deoxycytidine in DNA + succinate + CO2 + H2O. The enzyme catalyses a 5-formyl-2'-deoxycytidine in DNA + 2-oxoglutarate + O2 = a 5-carboxyl-2'-deoxycytidine in DNA + succinate + CO2 + H(+). Dioxygenase that catalyzes the conversion of the modified genomic base 5-methylcytosine (5mC) into 5-hydroxymethylcytosine (5hmC) and plays a key role in epigenetic chromatin reprogramming during embryonic development. Conversion of 5mC into 5hmC probably constitutes the first step in cytosine demethylation. Selectively binds to the promoter region of target genes and contributes to regulate the expression of numerous developmental genes, including pax6, rax, sox9 and six3. May also contribute to the regulation of target genes in ways that do not require its enzyme activity. This Xenopus tropicalis (Western clawed frog) protein is Methylcytosine dioxygenase tet3.